The primary structure comprises 339 residues: Probable protein phosphatase 2C 28 (339 aa).

Positions 87 to 334 (DHGYHLVKGQ…DDISCVVVSF (248 aa)) constitute a PPM-type phosphatase domain. Residues aspartate 124, glycine 125, aspartate 286, and aspartate 325 each contribute to the Mn(2+) site.

The protein belongs to the PP2C family. It depends on Mg(2+) as a cofactor. The cofactor is Mn(2+).

It catalyses the reaction O-phospho-L-seryl-[protein] + H2O = L-seryl-[protein] + phosphate. It carries out the reaction O-phospho-L-threonyl-[protein] + H2O = L-threonyl-[protein] + phosphate. The sequence is that of Probable protein phosphatase 2C 28 from Arabidopsis thaliana (Mouse-ear cress).